A 223-amino-acid polypeptide reads, in one-letter code: Small ribosomal subunit protein uS5 (223 aa).

The interval 1–48 is disordered; that stretch reads MPGRQRRDGGSGPAGQNGPNSGDNSNARGDNRGGGRDRRDGGRGGNAA. The span at 29–42 shows a compositional bias: basic and acidic residues; sequence GDNRGGGRDRRDGG. An S5 DRBM domain is found at 53-116; the sequence is FIERVVTINR…EEARKSFFRV (64 aa).

The protein belongs to the universal ribosomal protein uS5 family. In terms of assembly, part of the 30S ribosomal subunit. Contacts proteins S4 and S8.

Functionally, with S4 and S12 plays an important role in translational accuracy. In terms of biological role, located at the back of the 30S subunit body where it stabilizes the conformation of the head with respect to the body. This Rhodococcus erythropolis (strain PR4 / NBRC 100887) protein is Small ribosomal subunit protein uS5.